Consider the following 499-residue polypeptide: Potassium channel subfamily K member 5 (499 aa).

Topologically, residues 1-7 (MVDRGPL) are cytoplasmic. A helical transmembrane segment spans residues 8-26 (LTSAIIFYLAIGAAIFEVL). Asn77 carries an N-linked (GlcNAc...) asparagine glycan. Residues 85–112 (WPNAMIFAATVITTIGYGNVAPKTPAGR) constitute an intramembrane region (pore-forming). K(+) is bound by residues Thr98, Ile99, Gly100, and Tyr101. The selectivity filter 1 stretch occupies residues 98–103 (TIGYGN). The helical transmembrane segment at 113-133 (LFCVFYGLFGVPLCLTWISAL) threads the bilayer. At 134–157 (GKFFGGRAKRLGQFLTKRGVSLRK) the chain is on the cytoplasmic side. A helical transmembrane segment spans residues 158-180 (AQITCTVIFIVWGVLVHLVIPPF). The pore-forming intramembrane region spans 190–215 (YIEGLYYSFITISTIGFGDFVAGVNP). 4 residues coordinate K(+): Thr203, Ile204, Gly205, and Phe206. Residues 203–208 (TIGFGD) are selectivity filter 2. Residues 230-250 (WIYLGLAWLSLFVNWKVSMFV) form a helical membrane-spanning segment. The Cytoplasmic segment spans residues 251-325 (EVHKAIKKRR…SGGGETGPGP (75 aa)). Disordered stretches follow at residues 312–335 (AMKT…GGLP), 360–388 (QTLR…SPAP), and 428–499 (GLSD…PKGT). Residues 316-334 (SGGGETGPGPGLGPQGGGL) are compositionally biased toward gly residues. A compositionally biased stretch (basic and acidic residues) spans 370 to 382 (RSPDEEAVARAPE). At Ser371 the chain carries Phosphoserine. Positions 466–480 (SSSESTFTSTESELS) are enriched in low complexity.

The protein belongs to the two pore domain potassium channel (TC 1.A.1.8) family. In terms of assembly, homodimer; disulfide-linked. Heterodimer with KCNK16 and KCNK17. As to expression, abundant expression in kidney, also detected in liver, placenta and small intestine. In the kidney, expression is restricted to the distal tubules and collecting ducts. Not expressed in proximal tubules or glomeruli. Expressed in pancreas, in both endocrine (alpha, beta, gamma, delta, and epsilon) and exocrine (acinar and ductal) cells.

Its subcellular location is the membrane. It catalyses the reaction K(+)(in) = K(+)(out). The channel conductance is stimulated by extracellular alkaline pH. Inhibited by quinine, quinidine and external acidification. Functionally, k(+) channel that conducts voltage-dependent outward rectifying currents upon membrane depolarization. Voltage sensing is coupled to K(+) electrochemical gradient in an 'ion flux gating' mode where outward but not inward ion flow opens the gate. Homo- and heterodimerizes to form functional channels with distinct regulatory and gating properties. The chain is Potassium channel subfamily K member 5 from Homo sapiens (Human).